We begin with the raw amino-acid sequence, 256 residues long: Major prion protein (256 aa).

The N-terminal stretch at 1–24 is a signal peptide; sequence MVKSHIGSWILVLFVAMWSDVGLC. Positions 25-233 are interaction with GRB2, ERI3 and SYN1; sequence KKRPKPGGGW…ESQAYYQRGA (209 aa). Residues 28 to 110 form a disordered region; the sequence is PKPGGGWNTG…QWNKPSKPKT (83 aa). 5 repeat units span residues 54–62, 63–70, 71–78, 79–86, and 87–95. A 5 X 8 AA tandem repeats of P-H-G-G-G-W-G-Q region spans residues 54-95; that stretch reads PQGAGGWGQPHGGGWGQPHGGGWGQPHGGGWGQPHGGGGWGQ. Gly residues predominate over residues 56–97; it reads GAGGWGQPHGGGWGQPHGGGWGQPHGGGWGQPHGGGGWGQGG. His-64, Gly-65, Gly-66, His-72, Gly-73, Gly-74, His-80, Gly-81, Gly-82, His-88, Gly-90, and Gly-91 together coordinate Cu(2+). Cysteines 182 and 217 form a disulfide. 2 N-linked (GlcNAc...) asparagine glycosylation sites follow: Asn-184 and Asn-200. A lipid anchor (GPI-anchor amidated alanine) is attached at Ala-233. A propeptide spans 234–256 (removed in mature form); that stretch reads SVILFSSPPVILLISFLIFLIVG.

It belongs to the prion family. In terms of assembly, monomer and homodimer. Has a tendency to aggregate into amyloid fibrils containing a cross-beta spine, formed by a steric zipper of superposed beta-strands. Soluble oligomers may represent an intermediate stage on the path to fibril formation. Copper binding may promote oligomerization. Interacts with GRB2, APP, ERI3/PRNPIP and SYN1. Mislocalized cytosolically exposed PrP interacts with MGRN1; this interaction alters MGRN1 subcellular location and causes lysosomal enlargement. Interacts with KIAA1191.

It localises to the cell membrane. Its subcellular location is the golgi apparatus. Functionally, its primary physiological function is unclear. Has cytoprotective activity against internal or environmental stresses. May play a role in neuronal development and synaptic plasticity. May be required for neuronal myelin sheath maintenance. May play a role in iron uptake and iron homeostasis. Soluble oligomers are toxic to cultured neuroblastoma cells and induce apoptosis (in vitro). Association with GPC1 (via its heparan sulfate chains) targets PRNP to lipid rafts. Also provides Cu(2+) or Zn(2+) for the ascorbate-mediated GPC1 deaminase degradation of its heparan sulfate side chains. The chain is Major prion protein (PRNP) from Moschus chrysogaster (Alpine musk deer).